The sequence spans 338 residues: Beta-ketoacyl-[acyl-carrier-protein] synthase III 2 (338 aa).

Catalysis depends on residues Cys119 and His255. The interval 256 to 260 (QANIR) is ACP-binding. Residue Asn285 is part of the active site.

The protein belongs to the thiolase-like superfamily. FabH family. Homodimer.

The protein resides in the cytoplasm. The enzyme catalyses malonyl-[ACP] + acetyl-CoA + H(+) = 3-oxobutanoyl-[ACP] + CO2 + CoA. Its pathway is lipid metabolism; fatty acid biosynthesis. In terms of biological role, catalyzes the condensation reaction of fatty acid synthesis by the addition to an acyl acceptor of two carbons from malonyl-ACP. Catalyzes the first condensation reaction which initiates fatty acid synthesis and may therefore play a role in governing the total rate of fatty acid production. Possesses both acetoacetyl-ACP synthase and acetyl transacylase activities. Its substrate specificity determines the biosynthesis of branched-chain and/or straight-chain of fatty acids. The polypeptide is Beta-ketoacyl-[acyl-carrier-protein] synthase III 2 (Deinococcus radiodurans (strain ATCC 13939 / DSM 20539 / JCM 16871 / CCUG 27074 / LMG 4051 / NBRC 15346 / NCIMB 9279 / VKM B-1422 / R1)).